The following is a 1105-amino-acid chain: Ran-binding protein 6 (1105 aa).

A2 bears the N-acetylalanine mark. HEAT repeat units lie at residues 219-257 (FKDFADLLPGILQAVNDSCYQDDDSVLESLVEIADTVPK), 361-399 (KVVLPMTKEHIMQMLQSPDWKYRHAGLMALSAIGEGCHQ), 402-440 (ESILDETVNSVLLFLQDPHPRVRAAACTTLGQMATDFAP), and 444-483 (KKFHETVIAALLRTMENQGNQRVQSHAASALIIFIEDCPK). A ran-GTP binding region spans residues 333–383 (DEMEEDDFDSNAVAAESALDRLACGLGGKVVLPMTKEHIMQMLQSPDWKYR). The stretch at 806 to 842 (KAKLEGHFKNQELRQVKRQEENYDQQVEMSLQDEDEC) forms a coiled coil. 3 HEAT repeats span residues 866–905 (LPWFEQLLPLIVNLICSSRPWPDRQWGLCIFDDIIEHCSP), 908–946 (FKYVEYFRWPMLLNMRDNNPEVRQAAAYGLGVMAQFGGD), and 949–987 (RSLCSEAVPLLVKVIKCANSKTKKNVIATENCISAIGKI).

The protein belongs to the importin beta family.

It is found in the cytoplasm. Its subcellular location is the nucleus. Functionally, may function in nuclear protein import as nuclear transport receptor. This chain is Ran-binding protein 6 (RANBP6), found in Homo sapiens (Human).